The sequence spans 2890 residues: Bifunctional DNA-directed RNA polymerase subunit beta-beta' (2890 aa).

Positions 1-1377 (MSKKIPLKNR…DINIFGDDVD (1377 aa)) are DNA-directed RNA polymerase subunit beta. The interval 1384 to 2890 (PIVIKEDDRP…LRTLEDGPKF (1507 aa)) is DNA-directed RNA polymerase subunit beta'. Zn(2+)-binding residues include cysteine 1449, cysteine 1451, cysteine 1465, and cysteine 1468. Positions 1849, 1851, and 1853 each coordinate Mg(2+). The Zn(2+) site is built by cysteine 2179, cysteine 2253, cysteine 2260, and cysteine 2263.

This sequence in the N-terminal section; belongs to the RNA polymerase beta chain family. In the C-terminal section; belongs to the RNA polymerase beta' chain family. In terms of assembly, the RNAP catalytic core consists of 2 alpha, 1 beta/beta' and 1 omega subunit. When a sigma factor is associated with the core the holoenzyme is formed, which can initiate transcription. Requires Mg(2+) as cofactor. Zn(2+) is required as a cofactor.

It catalyses the reaction RNA(n) + a ribonucleoside 5'-triphosphate = RNA(n+1) + diphosphate. Its function is as follows. DNA-dependent RNA polymerase catalyzes the transcription of DNA into RNA using the four ribonucleoside triphosphates as substrates. The chain is Bifunctional DNA-directed RNA polymerase subunit beta-beta' (rpoBC) from Helicobacter pylori (strain HPAG1).